The primary structure comprises 845 residues: Lon protease (845 aa).

Positions 45 to 242 (MPILALRNMI…RLLYLLHKEL (198 aa)) constitute a Lon N-terminal domain. Residue 393–400 (GPPGVGKT) participates in ATP binding. In terms of domain architecture, Lon proteolytic spans 629–811 (NGDAGVVIGL…NEVLKEALLE (183 aa)). Catalysis depends on residues S717 and K760.

This sequence belongs to the peptidase S16 family. In terms of assembly, homohexamer. Organized in a ring with a central cavity.

The protein localises to the cytoplasm. It carries out the reaction Hydrolysis of proteins in presence of ATP.. In terms of biological role, ATP-dependent serine protease that mediates the selective degradation of mutant and abnormal proteins as well as certain short-lived regulatory proteins. Required for cellular homeostasis and for survival from DNA damage and developmental changes induced by stress. Degrades polypeptides processively to yield small peptide fragments that are 5 to 10 amino acids long. Binds to DNA in a double-stranded, site-specific manner. This Porphyromonas gingivalis (strain ATCC 33277 / DSM 20709 / CIP 103683 / JCM 12257 / NCTC 11834 / 2561) protein is Lon protease.